The following is a 182-amino-acid chain: UPF0301 protein NMC1274 (182 aa).

The protein belongs to the UPF0301 (AlgH) family.

This chain is UPF0301 protein NMC1274, found in Neisseria meningitidis serogroup C / serotype 2a (strain ATCC 700532 / DSM 15464 / FAM18).